We begin with the raw amino-acid sequence, 109 residues long: Cell division protein ZapA (109 aa).

Residues 21 to 97 are a coiled coil; sequence PEQRDALSQA…QTIEQALLDQ (77 aa).

This sequence belongs to the ZapA family. Type 1 subfamily. As to quaternary structure, homodimer. Interacts with FtsZ.

The protein resides in the cytoplasm. Its function is as follows. Activator of cell division through the inhibition of FtsZ GTPase activity, therefore promoting FtsZ assembly into bundles of protofilaments necessary for the formation of the division Z ring. It is recruited early at mid-cell but it is not essential for cell division. This is Cell division protein ZapA from Enterobacter sp. (strain 638).